The chain runs to 21 residues: GMASTAGSVLGKLAKVAIGAL.

Leu21 bears the Leucine amide mark.

In terms of tissue distribution, expressed by the skin glands.

The protein localises to the secreted. Its function is as follows. Antimicrobial peptide. This is Peptide PGLa-R5 from Xenopus ruwenzoriensis (Uganda clawed frog).